Here is a 488-residue protein sequence, read N- to C-terminus: Lysine--tRNA ligase (488 aa).

Mg(2+)-binding residues include E398 and E405.

Belongs to the class-II aminoacyl-tRNA synthetase family. In terms of assembly, homodimer. Requires Mg(2+) as cofactor.

The protein resides in the cytoplasm. It catalyses the reaction tRNA(Lys) + L-lysine + ATP = L-lysyl-tRNA(Lys) + AMP + diphosphate. This Carboxydothermus hydrogenoformans (strain ATCC BAA-161 / DSM 6008 / Z-2901) protein is Lysine--tRNA ligase.